The primary structure comprises 243 residues: Orotidine 5'-phosphate decarboxylase (243 aa).

Substrate-binding positions include aspartate 19, lysine 41, 69 to 78, threonine 124, arginine 185, glutamine 194, glycine 214, and arginine 215; that span reads DLKFFDIPAT. Lysine 71 (proton donor) is an active-site residue.

This sequence belongs to the OMP decarboxylase family. Type 1 subfamily. Homodimer.

It catalyses the reaction orotidine 5'-phosphate + H(+) = UMP + CO2. It functions in the pathway pyrimidine metabolism; UMP biosynthesis via de novo pathway; UMP from orotate: step 2/2. In terms of biological role, catalyzes the decarboxylation of orotidine 5'-monophosphate (OMP) to uridine 5'-monophosphate (UMP). This chain is Orotidine 5'-phosphate decarboxylase, found in Xanthomonas euvesicatoria pv. vesicatoria (strain 85-10) (Xanthomonas campestris pv. vesicatoria).